The following is a 688-amino-acid chain: Polyribonucleotide nucleotidyltransferase (688 aa).

2 residues coordinate Mg(2+): aspartate 484 and aspartate 490. The region spanning 550–609 is the KH domain; it reads PTTEIFNVAPDKIVEIIGQGGRVIKEIVEKFEVKIDLNKPSGEVKIMGNKERVLKTKEFI. Residues 626 to 688 enclose the S1 motif domain; it reads DEVLEAQVKR…NKGKIALDLA (63 aa).

Belongs to the polyribonucleotide nucleotidyltransferase family. Requires Mg(2+) as cofactor.

The protein localises to the cytoplasm. The catalysed reaction is RNA(n+1) + phosphate = RNA(n) + a ribonucleoside 5'-diphosphate. Functionally, involved in mRNA degradation. Catalyzes the phosphorolysis of single-stranded polyribonucleotides processively in the 3'- to 5'-direction. The protein is Polyribonucleotide nucleotidyltransferase of Helicobacter pylori (strain P12).